The primary structure comprises 236 residues: (5-formylfuran-3-yl)methyl phosphate synthase (236 aa).

Lysine 27 acts as the Schiff-base intermediate with substrate in catalysis. Catalysis depends on lysine 85, which acts as the Proton acceptor.

This sequence belongs to the MfnB family.

The enzyme catalyses 2 D-glyceraldehyde 3-phosphate = 4-(hydroxymethyl)-2-furancarboxaldehyde phosphate + phosphate + 2 H2O. The protein operates within cofactor biosynthesis; methanofuran biosynthesis. Functionally, catalyzes the formation of 4-(hydroxymethyl)-2-furancarboxaldehyde phosphate (4-HFC-P) from two molecules of glyceraldehyde-3-P (GA-3-P). This is (5-formylfuran-3-yl)methyl phosphate synthase from Methanothermobacter thermautotrophicus (strain ATCC 29096 / DSM 1053 / JCM 10044 / NBRC 100330 / Delta H) (Methanobacterium thermoautotrophicum).